Reading from the N-terminus, the 699-residue chain is Endogenous retrovirus group K member 113 Env polyprotein (699 aa).

The disordered stretch occupies residues Met1–Pro47. Residues Met1 to Ser89 form the signal peptide. Basic residues predominate over residues Ala10–Arg20. Residues Leu90–Thr632 are Extracellular-facing. N-linked (GlcNAc...) asparagine glycans are attached at residues Asn100, Asn128, Asn153, Asn274, Asn355, Asn372, and Asn461. The interval Phe466 to Val486 is fusion peptide. N-linked (GlcNAc...) asparagine glycosylation is found at Asn507, Asn554, Asn566, and Asn585. A helical membrane pass occupies residues Ile633 to Leu653. Residues Val654–Val699 are Cytoplasmic-facing.

It belongs to the beta type-B retroviral envelope protein family. HERV class-II K(HML-2) env subfamily. As to quaternary structure, the surface (SU) and transmembrane (TM) proteins form a heterodimer. SU and TM are attached by noncovalent interactions or by a labile interchain disulfide bond. Post-translationally, specific enzymatic cleavages in vivo yield the mature SU and TM proteins.

It is found in the cell membrane. The protein localises to the virion. Retroviral envelope proteins mediate receptor recognition and membrane fusion during early infection. Endogenous envelope proteins may have kept, lost or modified their original function during evolution. This endogenous envelope protein has lost its original fusogenic properties. In terms of biological role, SU mediates receptor recognition. Functionally, TM anchors the envelope heterodimer to the viral membrane through one transmembrane domain. The other hydrophobic domain, called fusion peptide, mediates fusion of the viral membrane with the target cell membrane. The polypeptide is Endogenous retrovirus group K member 113 Env polyprotein (HERVK_113) (Homo sapiens (Human)).